Reading from the N-terminus, the 231-residue chain is Biosynthetic peptidoglycan transglycosylase (231 aa).

The helical transmembrane segment at 10 to 30 threads the bilayer; that stretch reads LLLLGLIGLFLVWQLWLLGWV.

It belongs to the glycosyltransferase 51 family.

The protein localises to the cell inner membrane. The enzyme catalyses [GlcNAc-(1-&gt;4)-Mur2Ac(oyl-L-Ala-gamma-D-Glu-L-Lys-D-Ala-D-Ala)](n)-di-trans,octa-cis-undecaprenyl diphosphate + beta-D-GlcNAc-(1-&gt;4)-Mur2Ac(oyl-L-Ala-gamma-D-Glu-L-Lys-D-Ala-D-Ala)-di-trans,octa-cis-undecaprenyl diphosphate = [GlcNAc-(1-&gt;4)-Mur2Ac(oyl-L-Ala-gamma-D-Glu-L-Lys-D-Ala-D-Ala)](n+1)-di-trans,octa-cis-undecaprenyl diphosphate + di-trans,octa-cis-undecaprenyl diphosphate + H(+). The protein operates within cell wall biogenesis; peptidoglycan biosynthesis. Its function is as follows. Peptidoglycan polymerase that catalyzes glycan chain elongation from lipid-linked precursors. The chain is Biosynthetic peptidoglycan transglycosylase from Dechloromonas aromatica (strain RCB).